The sequence spans 75 residues: RNA-binding protein KhpA (75 aa).

Residues 29–75 enclose the KH domain; sequence SIILELKVSPEDMGKVIGKQGRIAKAIRTVVKAAAIKENKKVVVEII.

This sequence belongs to the KhpA RNA-binding protein family. In terms of assembly, forms a complex with KhpB.

It localises to the cytoplasm. A probable RNA chaperone. Forms a complex with KhpB which binds to cellular RNA and controls its expression. Plays a role in peptidoglycan (PG) homeostasis and cell length regulation. In Clostridium perfringens (strain 13 / Type A), this protein is RNA-binding protein KhpA.